The sequence spans 252 residues: Phosphonates import ATP-binding protein PhnC 1 (252 aa).

The 243-residue stretch at 2-244 (ISLNKLGVTY…QLEEIYQTLS (243 aa)) folds into the ABC transporter domain. Residue 35–42 (GSSGAGKS) coordinates ATP.

It belongs to the ABC transporter superfamily. Phosphonates importer (TC 3.A.1.9.1) family. As to quaternary structure, the complex is composed of two ATP-binding proteins (PhnC), two transmembrane proteins (PhnE) and a solute-binding protein (PhnD).

The protein resides in the cell inner membrane. The enzyme catalyses phosphonate(out) + ATP + H2O = phosphonate(in) + ADP + phosphate + H(+). In terms of biological role, part of the ABC transporter complex PhnCDE involved in phosphonates import. Responsible for energy coupling to the transport system. This Trichodesmium erythraeum (strain IMS101) protein is Phosphonates import ATP-binding protein PhnC 1.